A 554-amino-acid polypeptide reads, in one-letter code: Glucose-6-phosphate isomerase (554 aa).

Catalysis depends on glutamate 359, which acts as the Proton donor. Catalysis depends on residues histidine 390 and lysine 518.

This sequence belongs to the GPI family.

It is found in the cytoplasm. The enzyme catalyses alpha-D-glucose 6-phosphate = beta-D-fructose 6-phosphate. Its pathway is carbohydrate biosynthesis; gluconeogenesis. It functions in the pathway carbohydrate degradation; glycolysis; D-glyceraldehyde 3-phosphate and glycerone phosphate from D-glucose: step 2/4. Its function is as follows. Catalyzes the reversible isomerization of glucose-6-phosphate to fructose-6-phosphate. In Pseudomonas putida (strain ATCC 700007 / DSM 6899 / JCM 31910 / BCRC 17059 / LMG 24140 / F1), this protein is Glucose-6-phosphate isomerase.